The sequence spans 456 residues: Argininosuccinate lyase (456 aa).

The protein belongs to the lyase 1 family. Argininosuccinate lyase subfamily.

It is found in the cytoplasm. It carries out the reaction 2-(N(omega)-L-arginino)succinate = fumarate + L-arginine. Its pathway is amino-acid biosynthesis; L-arginine biosynthesis; L-arginine from L-ornithine and carbamoyl phosphate: step 3/3. The sequence is that of Argininosuccinate lyase from Listeria monocytogenes serotype 4b (strain CLIP80459).